The sequence spans 347 residues: Aspartate carbamoyltransferase catalytic subunit (347 aa).

Positions 75 and 76 each coordinate carbamoyl phosphate. Position 103 (lysine 103) interacts with L-aspartate. 3 residues coordinate carbamoyl phosphate: arginine 125, histidine 153, and glutamine 156. Positions 193 and 247 each coordinate L-aspartate. The carbamoyl phosphate site is built by glycine 288 and proline 289.

This sequence belongs to the aspartate/ornithine carbamoyltransferase superfamily. ATCase family. Heterododecamer (2C3:3R2) of six catalytic PyrB chains organized as two trimers (C3), and six regulatory PyrI chains organized as three dimers (R2).

The enzyme catalyses carbamoyl phosphate + L-aspartate = N-carbamoyl-L-aspartate + phosphate + H(+). It functions in the pathway pyrimidine metabolism; UMP biosynthesis via de novo pathway; (S)-dihydroorotate from bicarbonate: step 2/3. Catalyzes the condensation of carbamoyl phosphate and aspartate to form carbamoyl aspartate and inorganic phosphate, the committed step in the de novo pyrimidine nucleotide biosynthesis pathway. The chain is Aspartate carbamoyltransferase catalytic subunit from Erythrobacter litoralis (strain HTCC2594).